We begin with the raw amino-acid sequence, 1744 residues long: DNA-directed RNA polymerase I subunit RPA1 (1744 aa).

Residues cysteine 56, cysteine 69, and histidine 72 each coordinate Zn(2+). Mg(2+) contacts are provided by aspartate 597, aspartate 599, and aspartate 601. A bridging helix region spans residues 953–965 (PAEYTIHAMAGRD). The interval 1333 to 1484 (VPREKESGDG…RDGTDWGGTS (152 aa)) is disordered. Composition is skewed to gly residues over residues 1341–1354 (DGSG…GGSG) and 1366–1376 (DDGGGPLGGTF). The span at 1464-1478 (RDAEDGGEMQDRDGT) shows a compositional bias: basic and acidic residues.

This sequence belongs to the RNA polymerase beta' chain family. Component of the RNA polymerase I (Pol I) complex consisting of at least 13 subunits. Phosphorylated.

The protein localises to the nucleus. It is found in the nucleolus. It carries out the reaction RNA(n) + a ribonucleoside 5'-triphosphate = RNA(n+1) + diphosphate. Its function is as follows. DNA-dependent RNA polymerase catalyzes the transcription of DNA into RNA using the four ribonucleoside triphosphates as substrates. Largest and catalytic core component of RNA polymerase I which synthesizes ribosomal RNA precursors. Forms the polymerase active center together with the second largest subunit. A single stranded DNA template strand of the promoter is positioned within the central active site cleft of Pol I. A bridging helix emanates from RPA1 and crosses the cleft near the catalytic site and is thought to promote translocation of Pol I by acting as a ratchet that moves the RNA-DNA hybrid through the active site by switching from straight to bent conformations at each step of nucleotide addition. This Trypanosoma brucei brucei protein is DNA-directed RNA polymerase I subunit RPA1 (TRP11).